The following is a 396-amino-acid chain: Elongation factor Tu (396 aa).

Residues 10-206 (KPHVNIGTIG…ACDTYIPAPV (197 aa)) form the tr-type G domain. Residues 19–26 (GHVDHGKT) form a G1 region. 19–26 (GHVDHGKT) is a binding site for GTP. T26 contacts Mg(2+). The tract at residues 60–64 (GITIS) is G2. The G3 stretch occupies residues 81-84 (DCPG). Residues 81–85 (DCPGH) and 136–139 (NKVD) contribute to the GTP site. The interval 136 to 139 (NKVD) is G4. Positions 174 to 176 (SAL) are G5.

This sequence belongs to the TRAFAC class translation factor GTPase superfamily. Classic translation factor GTPase family. EF-Tu/EF-1A subfamily. As to quaternary structure, monomer.

The protein resides in the cytoplasm. It catalyses the reaction GTP + H2O = GDP + phosphate + H(+). Functionally, GTP hydrolase that promotes the GTP-dependent binding of aminoacyl-tRNA to the A-site of ribosomes during protein biosynthesis. This Bdellovibrio bacteriovorus (strain ATCC 15356 / DSM 50701 / NCIMB 9529 / HD100) protein is Elongation factor Tu.